We begin with the raw amino-acid sequence, 325 residues long: Glutarate 2-hydroxylase (325 aa).

Residues His160, Asp162, and His292 each coordinate Fe cation.

This sequence belongs to the glutarate hydroxylase family. As to quaternary structure, homotetramer. The cofactor is Fe(2+).

The catalysed reaction is glutarate + 2-oxoglutarate + O2 = (S)-2-hydroxyglutarate + succinate + CO2. It functions in the pathway amino-acid degradation. Acts as an alpha-ketoglutarate-dependent dioxygenase catalyzing hydroxylation of glutarate (GA) to L-2-hydroxyglutarate (L2HG). Functions in a L-lysine degradation pathway that proceeds via cadaverine, glutarate and L-2-hydroxyglutarate. The polypeptide is Glutarate 2-hydroxylase (Escherichia coli O7:K1 (strain IAI39 / ExPEC)).